Consider the following 153-residue polypeptide: Prostaglandin E synthase (153 aa).

The Lumenal portion of the chain corresponds to 1–13; it reads MPPPVLALVSGQA. The helical transmembrane segment at 14 to 42 threads the bilayer; that stretch reads LPAFLLCSTLLVIKMYVVAVITGQVRLRK. Residue Arg-39 participates in glutathione binding. Residues 43–61 lie on the Cytoplasmic side of the membrane; it reads KAFANPEDALRHGGLQYCR. A helical transmembrane segment spans residues 62–91; it reads SDQDVDRCLRAHRNDMETIYPFLFLGFVYS. 74–78 serves as a coordination point for glutathione; the sequence is RNDME. Topologically, residues 92–96 are lumenal; it reads FLGPD. The chain crosses the membrane as a helical span at residues 97-120; sequence PFIAQMHFLVFFLGRMVHTVAYLG. 2 residues coordinate glutathione: His-114 and Tyr-118. The Cytoplasmic portion of the chain corresponds to 121–124; that stretch reads KLRA. Residues 125 to 153 traverse the membrane as a helical segment; that stretch reads PTRSLAYTVAQLPCASMALQIVWEAACHL. 127 to 131 is a glutathione binding site; the sequence is RSLAY.

This sequence belongs to the MAPEG family. Homotrimer. It depends on glutathione as a cofactor.

The protein resides in the membrane. The protein localises to the cytoplasm. It localises to the perinuclear region. The enzyme catalyses prostaglandin H2 = prostaglandin E2. It catalyses the reaction 2-glyceryl-prostaglandin H2 = 2-glyceryl-prostaglandin E2. It carries out the reaction prostaglandin G2 = (15S)-15-hydroperoxy-prostaglandin E2. The catalysed reaction is 1-chloro-2,4-dinitrobenzene + glutathione = 2,4-dinitrophenyl-S-glutathione + chloride + H(+). The enzyme catalyses (5S)-hydroperoxy-(6E,8Z,11Z,14Z)-eicosatetraenoate + 2 glutathione = (5S)-hydroxy-(6E,8Z,11Z,14Z)-eicosatetraenoate + glutathione disulfide + H2O. The protein operates within lipid metabolism; prostaglandin biosynthesis. Functionally, terminal enzyme of the cyclooxygenase (COX)-2-mediated prostaglandin E2 (PGE2) biosynthetic pathway. Catalyzes the glutathione-dependent oxidoreduction of prostaglandin endoperoxide H2 (PGH2) to prostaglandin E2 (PGE2) in response to inflammatory stimuli. Plays a key role in inflammation response, fever and pain. Also catalyzes the oxidoreduction of endocannabinoids into prostaglandin glycerol esters and PGG2 into 15-hydroperoxy-PGE2. In addition, displays low glutathione transferase and glutathione-dependent peroxidase activities, toward 1-chloro-2,4-dinitrobenzene and 5-hydroperoxyicosatetraenoic acid (5-HPETE), respectively. This Canis lupus familiaris (Dog) protein is Prostaglandin E synthase (PTGES).